We begin with the raw amino-acid sequence, 128 residues long: MTRIRRGNIARRRRTKIRLFASSFRGAHSRLTRTITQQKIRALVSSHRDRDKQKRNFRRLWITRINAVIREIGVSYSYSRLIHALYKKQVLLNRKILAQIAISNKNCLYMISNEIIKEVDWKESTGII.

It belongs to the bacterial ribosomal protein bL20 family.

It localises to the plastid. It is found in the chloroplast. In terms of biological role, binds directly to 23S ribosomal RNA and is necessary for the in vitro assembly process of the 50S ribosomal subunit. It is not involved in the protein synthesizing functions of that subunit. The polypeptide is Large ribosomal subunit protein bL20c (Daucus carota (Wild carrot)).